Reading from the N-terminus, the 489-residue chain is Glycogen synthase (489 aa).

Arginine 20 contacts ADP-alpha-D-glucose.

This sequence belongs to the glycosyltransferase 1 family. Bacterial/plant glycogen synthase subfamily.

The enzyme catalyses [(1-&gt;4)-alpha-D-glucosyl](n) + ADP-alpha-D-glucose = [(1-&gt;4)-alpha-D-glucosyl](n+1) + ADP + H(+). The protein operates within glycan biosynthesis; glycogen biosynthesis. Synthesizes alpha-1,4-glucan chains using ADP-glucose. This chain is Glycogen synthase, found in Pelodictyon phaeoclathratiforme (strain DSM 5477 / BU-1).